The primary structure comprises 475 residues: Ribulose bisphosphate carboxylase large chain (475 aa).

Lys-14 is modified (N6,N6,N6-trimethyllysine). Residues Asn-123 and Thr-173 each coordinate substrate. Lys-175 (proton acceptor) is an active-site residue. Residue Lys-177 participates in substrate binding. Mg(2+) is bound by residues Lys-201, Asp-203, and Glu-204. Lys-201 bears the N6-carboxylysine mark. His-294 acts as the Proton acceptor in catalysis. 3 residues coordinate substrate: Arg-295, His-327, and Ser-379.

This sequence belongs to the RuBisCO large chain family. Type I subfamily. As to quaternary structure, heterohexadecamer of 8 large chains and 8 small chains; disulfide-linked. The disulfide link is formed within the large subunit homodimers. It depends on Mg(2+) as a cofactor. Post-translationally, the disulfide bond which can form in the large chain dimeric partners within the hexadecamer appears to be associated with oxidative stress and protein turnover.

The protein resides in the plastid. It catalyses the reaction 2 (2R)-3-phosphoglycerate + 2 H(+) = D-ribulose 1,5-bisphosphate + CO2 + H2O. The enzyme catalyses D-ribulose 1,5-bisphosphate + O2 = 2-phosphoglycolate + (2R)-3-phosphoglycerate + 2 H(+). In terms of biological role, ruBisCO catalyzes two reactions: the carboxylation of D-ribulose 1,5-bisphosphate, the primary event in carbon dioxide fixation, as well as the oxidative fragmentation of the pentose substrate in the photorespiration process. Both reactions occur simultaneously and in competition at the same active site. This Euglena longa (Euglenophycean alga) protein is Ribulose bisphosphate carboxylase large chain (rbcL).